We begin with the raw amino-acid sequence, 512 residues long: NAD(P) transhydrogenase subunit alpha (512 aa).

Topologically, residues 1-400 (MLIGVPRELL…KESKPTDPRV (400 aa)) are cytoplasmic. NAD(+) contacts are provided by residues 125-128 (QALD), Val-175, 195-197 (DSR), and Gly-225. The disordered stretch occupies residues 375–394 (SAQPKQETKAAPVAEKKESK). 2 helical membrane passes run 401-421 (KYGV…VAPA) and 422-442 (AFLS…YVVW). The Cytoplasmic segment spans residues 443-451 (NVSHALHTP). The helical transmembrane segment at 452 to 472 (LMAVTNAISGIIIVGALLQIR) threads the bilayer. The Periplasmic segment spans residues 473–478 (QPTGNL). A helical membrane pass occupies residues 479–499 (FIDALAFVAILVASINIFGGF). The Cytoplasmic segment spans residues 500–512 (RVTQRMLAMFRKG).

The protein belongs to the AlaDH/PNT family. In terms of assembly, heterodimer of an alpha (PntA) and a beta (PntB) chain.

The protein localises to the cell inner membrane. The enzyme catalyses NAD(+) + NADPH + H(+)(in) = NADH + NADP(+) + H(+)(out). Its function is as follows. The transhydrogenation between NADH and NADP is coupled to respiration and ATP hydrolysis and functions as a proton pump across the membrane. In Haemophilus influenzae (strain ATCC 51907 / DSM 11121 / KW20 / Rd), this protein is NAD(P) transhydrogenase subunit alpha (pntA).